A 958-amino-acid polypeptide reads, in one-letter code: Protein translocase subunit SecA (958 aa).

Residues Gln87, 105–109 (GEGKT), and Asp524 each bind ATP. A disordered region spans residues 598–617 (RRIDNQLRGRSGRQGDPGRS). Residues Cys939, Cys941, Cys950, and His951 each contribute to the Zn(2+) site.

This sequence belongs to the SecA family. In terms of assembly, monomer and homodimer. Part of the essential Sec protein translocation apparatus which comprises SecA, SecYEG and auxiliary proteins SecDF-YajC and YidC. Zn(2+) serves as cofactor.

Its subcellular location is the cell inner membrane. The protein resides in the cytoplasm. The catalysed reaction is ATP + H2O + cellular proteinSide 1 = ADP + phosphate + cellular proteinSide 2.. In terms of biological role, part of the Sec protein translocase complex. Interacts with the SecYEG preprotein conducting channel. Has a central role in coupling the hydrolysis of ATP to the transfer of proteins into and across the cell membrane, serving both as a receptor for the preprotein-SecB complex and as an ATP-driven molecular motor driving the stepwise translocation of polypeptide chains across the membrane. This chain is Protein translocase subunit SecA, found in Methylobacterium sp. (strain 4-46).